A 423-amino-acid polypeptide reads, in one-letter code: MAFRKSNVYLSLVNSYIIDSPQPSSINYWWNMGSLLGLCLVIQIVTGIFMAMHYSSNIELAFSSVEHIMRDVHNGYILRYLHANGASFFFMVMFMHMAKGLYYGSYRSPRVTLWNVGVIIFILTIATAFLGYCCVYGQMSHWGNMNIASNMFNMMKTIYMMMLMLLIYIFYTIMMRQMMKTKEYTMLIKSMDYINKNKYMINLNMTNKKDMNNNIGPLNMNILSIIYGSMLGDGHAEKRKGGKGTRIVFQQEYCNINYLYYLHSLLANLGYCNTNLPLIKTRLGKKGKIRQYLKFNTWTYDSFNMIYSEWYIKNMSGKGNIKVIPKSLDNYLTPLALAIWIMDDGCKLGKGLKFTTNCFSYKDVQYLTYLLHNKYNIKSTITKGNKENTQFVIYVWKESMPILTKIVSPYIIPSMKYKLGNYL.

At 1-31 (MAFRKSNVYLSLVNSYIIDSPQPSSINYWWN) the chain is on the mitochondrial matrix side. The cytochrome b stretch occupies residues 1–143 (MAFRKSNVYL…CVYGQMSHWG (143 aa)). A helical transmembrane segment spans residues 32–52 (MGSLLGLCLVIQIVTGIFMAM). At 53-84 (HYSSNIELAFSSVEHIMRDVHNGYILRYLHAN) the chain is on the mitochondrial intermembrane side. Residues 85–105 (GASFFFMVMFMHMAKGLYYGS) form a helical membrane-spanning segment. Topologically, residues 106-115 (YRSPRVTLWN) are mitochondrial matrix. The chain crosses the membrane as a helical span at residues 116–136 (VGVIIFILTIATAFLGYCCVY). Residues 137 to 153 (GQMSHWGNMNIASNMFN) are Mitochondrial intermembrane-facing. The interval 144 to 423 (NMNIASNMFN…SMKYKLGNYL (280 aa)) is maturase. Residues 154–174 (MMKTIYMMMLMLLIYIFYTIM) traverse the membrane as a helical segment. Residues 175 to 423 (MRQMMKTKEY…SMKYKLGNYL (249 aa)) are Mitochondrial matrix-facing.

In the N-terminal section; belongs to the cytochrome b family. The protein in the C-terminal section; belongs to the LAGLIDADG endonuclease family.

The protein localises to the mitochondrion inner membrane. In terms of biological role, this protein is responsible for splicing and maturation of cytochrome b mRNA. Specifically, it may be responsible for the splicing specificity of the second intron. This is Cytochrome b mRNA maturase bI2 (BI2) from Saccharomyces cerevisiae (strain ATCC 204508 / S288c) (Baker's yeast).